We begin with the raw amino-acid sequence, 547 residues long: ATP synthase subunit alpha (547 aa).

ATP is bound at residue 172 to 179; that stretch reads GDRKTGKT.

The protein belongs to the ATPase alpha/beta chains family. As to quaternary structure, F-type ATPases have 2 components, CF(1) - the catalytic core - and CF(0) - the membrane proton channel. CF(1) has five subunits: alpha(3), beta(3), gamma(1), delta(1), epsilon(1). CF(0) has three main subunits: a(1), b(2) and c(9-12). The alpha and beta chains form an alternating ring which encloses part of the gamma chain. CF(1) is attached to CF(0) by a central stalk formed by the gamma and epsilon chains, while a peripheral stalk is formed by the delta and b chains.

The protein resides in the cell membrane. It catalyses the reaction ATP + H2O + 4 H(+)(in) = ADP + phosphate + 5 H(+)(out). Produces ATP from ADP in the presence of a proton gradient across the membrane. The alpha chain is a regulatory subunit. This Corynebacterium glutamicum (strain R) protein is ATP synthase subunit alpha.